The chain runs to 100 residues: Large ribosomal subunit protein uL23 (100 aa).

Belongs to the universal ribosomal protein uL23 family. In terms of assembly, part of the 50S ribosomal subunit. Contacts protein L29, and trigger factor when it is bound to the ribosome.

Its function is as follows. One of the early assembly proteins it binds 23S rRNA. One of the proteins that surrounds the polypeptide exit tunnel on the outside of the ribosome. Forms the main docking site for trigger factor binding to the ribosome. In Mycobacterium marinum (strain ATCC BAA-535 / M), this protein is Large ribosomal subunit protein uL23.